The chain runs to 1203 residues: Cingulin (1203 aa).

The head stretch occupies residues 7–357 (MAEPRGPVDH…VMVSSGSTKA (351 aa)). The disordered stretch occupies residues 25–48 (EPVSGAEMGTLRRGGRRPAKDARA). The ZIM motif lies at 48–62 (ASTYGVAVRVQGIAG). An interaction with TJP1/ZO1 region spans residues 54–67 (AVRVQGIAGQPFVV). Positions 89 to 127 (GASGALSSDLELPENPYSQVKGFPAPSQSSTSDEEPGAY) are disordered. Residues Ser95, Ser96, Ser135, Ser137, Ser140, Ser155, Ser165, Ser214, Ser217, Ser258, Ser276, Ser338, and Ser351 each carry the phosphoserine modification. Residues 186–266 (DSQLGGQARG…LSPLSGFSRS (81 aa)) form a disordered region. Positions 207-231 (EQRKRSKSLDSRLPRDTFEERERQS) are enriched in basic and acidic residues. Residues 232 to 266 (TNHWTSSTKYDNHVGTSKQPAQSQNLSPLSGFSRS) are compositionally biased toward polar residues. Residues 358-1160 (VAGQGELTRK…SLEKDSWRKA (803 aa)) adopt a coiled-coil conformation. N6-acetyllysine is present on Lys579. Thr712 carries the post-translational modification Phosphothreonine. 2 disordered regions span residues 1034 to 1053 (LASS…LESQ) and 1154 to 1181 (KDSW…EEFD). Low complexity predominate over residues 1044–1053 (SASLSQLESQ). Positions 1161–1203 (SRSAAESALKNEGLSSDEEFDSVYDPSSIASLLTESNLQTSSC) are tail. Phosphoserine is present on residues Ser1175, Ser1176, and Ser1182.

The protein belongs to the cingulin family. In terms of assembly, homodimer. Interacts with TJP1/ZO1. Interacts with SPEF1. Localized on the cytoplasmic face of tight junctions of polarized epithelia and some endothelia. Expressed in pancreas, kidney, liver and lung, but not in skeletal muscle, placenta, brain or heart.

Its subcellular location is the cell junction. It localises to the tight junction. Its function is as follows. Probably plays a role in the formation and regulation of the tight junction (TJ) paracellular permeability barrier. In Homo sapiens (Human), this protein is Cingulin.